The sequence spans 237 residues: Golgi anti-apoptotic protein (237 aa).

At 1 to 37 the chain is on the cytoplasmic side; sequence MAMPSLSACSSIEDDFNYGSSVASASVHIRMAFLRKV. The chain crosses the membrane as a helical span at residues 38–58; the sequence is YGILCLQFLLTTATTAVFLYF. Residues 59–67 are Lumenal-facing; the sequence is DCMRTFIQG. A helical transmembrane segment spans residues 68–88; sequence SPVLILASMFGSIGLIFALTL. The Cytoplasmic portion of the chain corresponds to 89–94; that stretch reads HRHKHP. The helical transmembrane segment at 95 to 115 threads the bilayer; the sequence is LNLYLLCGFTLSESLTLASVV. A topological domain (lumenal) is located at residue threonine 116. A helical transmembrane segment spans residues 117–137; that stretch reads FYDVHVVMQAFMLTTAAFLAL. Over 138 to 151 the chain is Cytoplasmic; the sequence is TTYTLQSKRDFSKL. The helical transmembrane segment at 152-172 threads the bilayer; the sequence is GAGLFAALWILILSGLLGIFV. The Lumenal segment spans residues 173-174; that stretch reads QN. The helical transmembrane segment at 175–195 threads the bilayer; sequence ETVKLVLSAFGALVFCGFIIY. Residues 196–209 are Cytoplasmic-facing; it reads DTHSLIHKLSPEEY. The segment at residues 210–230 is an intramembrane region (helical); the sequence is VLASINLYLDIINLFLHLLQL. The Cytoplasmic portion of the chain corresponds to 231–237; sequence LEVSNKK.

The protein belongs to the BI1 family. LFG subfamily.

It localises to the host Golgi apparatus membrane. Functionally, may affect virulence through inhibition of apoptosis. The protein is Golgi anti-apoptotic protein (L6) of Vaccinia virus (strain LC16m0) (VACV).